Here is a 137-residue protein sequence, read N- to C-terminus: Phosphoribosyl-AMP cyclohydrolase (137 aa).

Asp84 contributes to the Mg(2+) binding site. Cys85 is a binding site for Zn(2+). Residues Asp86 and Asp88 each coordinate Mg(2+). Zn(2+) contacts are provided by Cys101 and Cys108.

This sequence belongs to the PRA-CH family. As to quaternary structure, homodimer. It depends on Mg(2+) as a cofactor. Zn(2+) is required as a cofactor.

The protein resides in the cytoplasm. The catalysed reaction is 1-(5-phospho-beta-D-ribosyl)-5'-AMP + H2O = 1-(5-phospho-beta-D-ribosyl)-5-[(5-phospho-beta-D-ribosylamino)methylideneamino]imidazole-4-carboxamide. It functions in the pathway amino-acid biosynthesis; L-histidine biosynthesis; L-histidine from 5-phospho-alpha-D-ribose 1-diphosphate: step 3/9. Catalyzes the hydrolysis of the adenine ring of phosphoribosyl-AMP. This chain is Phosphoribosyl-AMP cyclohydrolase, found in Chlorobium phaeovibrioides (strain DSM 265 / 1930) (Prosthecochloris vibrioformis (strain DSM 265)).